We begin with the raw amino-acid sequence, 228 residues long: ATP-dependent dethiobiotin synthetase BioD (228 aa).

13–18 (DVGKTV) is an ATP binding site. Thr17 contributes to the Mg(2+) binding site. Lys38 is an active-site residue. ATP-binding positions include Asp55, 116 to 119 (EGAG), 176 to 177 (NR), and 205 to 207 (PYI). Residues Asp55 and Glu116 each coordinate Mg(2+).

The protein belongs to the dethiobiotin synthetase family. As to quaternary structure, homodimer. The cofactor is Mg(2+).

The protein resides in the cytoplasm. It carries out the reaction (7R,8S)-7,8-diammoniononanoate + CO2 + ATP = (4R,5S)-dethiobiotin + ADP + phosphate + 3 H(+). Its pathway is cofactor biosynthesis; biotin biosynthesis; biotin from 7,8-diaminononanoate: step 1/2. Functionally, catalyzes a mechanistically unusual reaction, the ATP-dependent insertion of CO2 between the N7 and N8 nitrogen atoms of 7,8-diaminopelargonic acid (DAPA, also called 7,8-diammoniononanoate) to form a ureido ring. The sequence is that of ATP-dependent dethiobiotin synthetase BioD from Vibrio parahaemolyticus serotype O3:K6 (strain RIMD 2210633).